The primary structure comprises 214 residues: ATP phosphoribosyltransferase (214 aa).

The protein belongs to the ATP phosphoribosyltransferase family. Short subfamily. In terms of assembly, heteromultimer composed of HisG and HisZ subunits.

The protein resides in the cytoplasm. The catalysed reaction is 1-(5-phospho-beta-D-ribosyl)-ATP + diphosphate = 5-phospho-alpha-D-ribose 1-diphosphate + ATP. It functions in the pathway amino-acid biosynthesis; L-histidine biosynthesis; L-histidine from 5-phospho-alpha-D-ribose 1-diphosphate: step 1/9. Functionally, catalyzes the condensation of ATP and 5-phosphoribose 1-diphosphate to form N'-(5'-phosphoribosyl)-ATP (PR-ATP). Has a crucial role in the pathway because the rate of histidine biosynthesis seems to be controlled primarily by regulation of HisG enzymatic activity. This Halorhodospira halophila (strain DSM 244 / SL1) (Ectothiorhodospira halophila (strain DSM 244 / SL1)) protein is ATP phosphoribosyltransferase.